The primary structure comprises 73 residues: Translation initiation factor IF-1 (73 aa).

The 73-residue stretch at 1–73 (MAKKQGAIEI…TRGRIVYRYK (73 aa)) folds into the S1-like domain.

The protein belongs to the IF-1 family. Component of the 30S ribosomal translation pre-initiation complex which assembles on the 30S ribosome in the order IF-2 and IF-3, IF-1 and N-formylmethionyl-tRNA(fMet); mRNA recruitment can occur at any time during PIC assembly.

The protein resides in the cytoplasm. Functionally, one of the essential components for the initiation of protein synthesis. Stabilizes the binding of IF-2 and IF-3 on the 30S subunit to which N-formylmethionyl-tRNA(fMet) subsequently binds. Helps modulate mRNA selection, yielding the 30S pre-initiation complex (PIC). Upon addition of the 50S ribosomal subunit IF-1, IF-2 and IF-3 are released leaving the mature 70S translation initiation complex. In Streptomyces coelicolor (strain ATCC BAA-471 / A3(2) / M145), this protein is Translation initiation factor IF-1.